Consider the following 263-residue polypeptide: MAVLSLAQMLEAGVHFGHQARRWNPRMAPYIFTVRNGVHIIDLVQTAQLVEEAYNYIRNAAEKGKRFLFIGTKRQAAGIVEQEALRCGSYYVNQRWLGGMLTNWTTIKTRVDRLKELESMEESGLIDLRPKQEASALRRELARLQKYLGGIKQMRRLPDIAIIVDVKREYNAVAECHKLGIPIVALLDTNCDPTQVDIPIPANDDAIRSIKLIVGKLADAIYEGRHGQLEEPEADLADEDDNGMTTSDDGDAEALDIPDDSDA.

The interval 228 to 263 is disordered; that stretch reads QLEEPEADLADEDDNGMTTSDDGDAEALDIPDDSDA. Positions 230–263 are enriched in acidic residues; that stretch reads EEPEADLADEDDNGMTTSDDGDAEALDIPDDSDA.

Belongs to the universal ribosomal protein uS2 family.

The chain is Small ribosomal subunit protein uS2 from Thermosynechococcus vestitus (strain NIES-2133 / IAM M-273 / BP-1).